Here is a 126-residue protein sequence, read N- to C-terminus: Small ribosomal subunit protein uS13 (126 aa).

A disordered region spans residues 94 to 126 (GLPVRGQKTRNNAHTVKGKPKAAIAGKKKNKVN). The segment covering 109–126 (VKGKPKAAIAGKKKNKVN) has biased composition (basic residues).

This sequence belongs to the universal ribosomal protein uS13 family. Part of the 30S ribosomal subunit. Forms a loose heterodimer with protein S19. Forms two bridges to the 50S subunit in the 70S ribosome.

Functionally, located at the top of the head of the 30S subunit, it contacts several helices of the 16S rRNA. In the 70S ribosome it contacts the 23S rRNA (bridge B1a) and protein L5 of the 50S subunit (bridge B1b), connecting the 2 subunits; these bridges are implicated in subunit movement. Contacts the tRNAs in the A and P-sites. In Aster yellows witches'-broom phytoplasma (strain AYWB), this protein is Small ribosomal subunit protein uS13.